Consider the following 509-residue polypeptide: 2,3-bisphosphoglycerate-independent phosphoglycerate mutase (509 aa).

Mn(2+) is bound at residue Asp-11. Tyr-35 is subject to Phosphotyrosine. Ser-61 is a binding site for Mn(2+). Ser-61 acts as the Phosphoserine intermediate in catalysis. Substrate is bound by residues His-122, 152–153 (RD), Arg-184, Arg-190, 260–263 (RPDR), and Lys-335. Positions 402, 406, 443, 444, and 461 each coordinate Mn(2+).

It belongs to the BPG-independent phosphoglycerate mutase family. Monomer. Requires Mn(2+) as cofactor.

The catalysed reaction is (2R)-2-phosphoglycerate = (2R)-3-phosphoglycerate. Its pathway is carbohydrate degradation; glycolysis; pyruvate from D-glyceraldehyde 3-phosphate: step 3/5. Functionally, essential for rapid growth and for sporulation. Catalyzes the interconversion of 2-phosphoglycerate and 3-phosphoglycerate. In Bacillus anthracis, this protein is 2,3-bisphosphoglycerate-independent phosphoglycerate mutase.